Consider the following 197-residue polypeptide: Ribosome maturation factor RimM (197 aa).

The 73-residue stretch at 92–164 (DEGWYEHELV…YILVTPPPGL (73 aa)) folds into the PRC barrel domain. The interval 167–197 (INVEDSGETSDAGESGPGEAEPGKAEAGDNA) is disordered. The span at 176-186 (SDAGESGPGEA) shows a compositional bias: low complexity. The span at 187–197 (EPGKAEAGDNA) shows a compositional bias: basic and acidic residues.

The protein belongs to the RimM family. Binds ribosomal protein uS19.

It is found in the cytoplasm. Its function is as follows. An accessory protein needed during the final step in the assembly of 30S ribosomal subunit, possibly for assembly of the head region. Essential for efficient processing of 16S rRNA. May be needed both before and after RbfA during the maturation of 16S rRNA. It has affinity for free ribosomal 30S subunits but not for 70S ribosomes. The polypeptide is Ribosome maturation factor RimM (Arthrobacter sp. (strain FB24)).